Here is a 1400-residue protein sequence, read N- to C-terminus: DNA-directed RNA polymerase subunit beta' (1400 aa).

Cysteine 70, cysteine 72, cysteine 85, and cysteine 88 together coordinate Zn(2+). 3 residues coordinate Mg(2+): aspartate 460, aspartate 462, and aspartate 464. The Zn(2+) site is built by cysteine 814, cysteine 888, cysteine 895, and cysteine 898.

It belongs to the RNA polymerase beta' chain family. The RNAP catalytic core consists of 2 alpha, 1 beta, 1 beta' and 1 omega subunit. When a sigma factor is associated with the core the holoenzyme is formed, which can initiate transcription. The cofactor is Mg(2+). Zn(2+) serves as cofactor.

The catalysed reaction is RNA(n) + a ribonucleoside 5'-triphosphate = RNA(n+1) + diphosphate. Functionally, DNA-dependent RNA polymerase catalyzes the transcription of DNA into RNA using the four ribonucleoside triphosphates as substrates. This chain is DNA-directed RNA polymerase subunit beta', found in Vibrio vulnificus (strain CMCP6).